A 243-amino-acid chain; its full sequence is Small ribosomal subunit protein uS3 (243 aa).

Residues 39 to 110 enclose the KH type-2 domain; that stretch reads IRKFIHKKYG…QVRINVVEVE (72 aa). Positions 217-243 are disordered; sequence QQLPVGATPRRRAGRRPQQFEDRSNEG. Basic and acidic residues predominate over residues 234–243; sequence QQFEDRSNEG.

Belongs to the universal ribosomal protein uS3 family. In terms of assembly, part of the 30S ribosomal subunit. Forms a tight complex with proteins S10 and S14.

Binds the lower part of the 30S subunit head. Binds mRNA in the 70S ribosome, positioning it for translation. This is Small ribosomal subunit protein uS3 from Synechococcus sp. (strain WH7803).